A 573-amino-acid chain; its full sequence is Ribosomal RNA-processing protein 9 (573 aa).

The tract at residues 1–63 (MSDVTQQKKR…FEGENPADKR (63 aa)) is disordered. Residue Ser2 is modified to N-acetylserine. A compositionally biased stretch (acidic residues) spans 25 to 58 (DEEITDPSSNEDEQLEVSDEEDALESEEEFEGEN). Residues 32–106 (SSNEDEQLEV…KERTIDEYNN (75 aa)) are a coiled coil. Ser50 is modified (phosphoserine). WD repeat units follow at residues 234–273 (GHYD…PVKV), 278–317 (DRRG…QLEI), 320–359 (GHHD…RLTF), 397–435 (FCEG…PIFT), 471–509 (QPFW…RSFE), and 516–562 (GAKG…ARNG).

This sequence belongs to the WD repeat RRP9 family. As to quaternary structure, interacts with UTP25. Component of the ribosomal small subunit (SSU) processome composed of at least 40 protein subunits and snoRNA U3.

The protein localises to the nucleus. It is found in the nucleolus. In terms of biological role, involved in nucleolar processing of pre-18S ribosomal RNA. Required for efficient pre-rRNA cleavage at sites A0, A1 and A2, and biosynthesis of 18S rRNA. The chain is Ribosomal RNA-processing protein 9 (RRP9) from Saccharomyces cerevisiae (strain ATCC 204508 / S288c) (Baker's yeast).